Reading from the N-terminus, the 189-residue chain is MASNESGGGNLMDEFEEAFQSCLLTLTKQEPNSGTNKEEIDLEVQKTTNRFIDVARQMEAFFLQKRFLVSTLKPYMLIKDENQDLSIEIQRKEALLQKHYNRLEEWKACLSDIQQGVHSRPTPPIGSGMLQGPGGGMPPMGGTPPRPGMMPGMPPGAMQPGGPMQPSPHMLQAQQMQQLRMISRQMPPK.

Positions Tyr-75–Gln-115 form a coiled coil. The segment at Pro-124–Pro-147 is disordered. Positions Met-129 to Pro-139 are enriched in gly residues.

Belongs to the Mediator complex subunit 28 family. As to quaternary structure, component of the Mediator complex, which includes at least CDK8, MED4, MED6, MED11, MED14, MED17, MED18, MED20, MED21, MED22, MED27, MED28, MED30 and MED31.

The protein resides in the nucleus. Its function is as follows. Component of the Mediator complex, a coactivator involved in the regulated transcription of nearly all RNA polymerase II-dependent genes. Mediator functions as a bridge to convey information from gene-specific regulatory proteins to the basal RNA polymerase II transcription machinery. Mediator is recruited to promoters by direct interactions with regulatory proteins and serves as a scaffold for the assembly of a functional preinitiation complex with RNA polymerase II and the general transcription factors. This chain is Mediator of RNA polymerase II transcription subunit 28 (MED28), found in Drosophila melanogaster (Fruit fly).